A 93-amino-acid chain; its full sequence is Phosphoribosyl-ATP pyrophosphatase (93 aa).

The protein belongs to the PRA-PH family.

The protein localises to the cytoplasm. The enzyme catalyses 1-(5-phospho-beta-D-ribosyl)-ATP + H2O = 1-(5-phospho-beta-D-ribosyl)-5'-AMP + diphosphate + H(+). Its pathway is amino-acid biosynthesis; L-histidine biosynthesis; L-histidine from 5-phospho-alpha-D-ribose 1-diphosphate: step 2/9. The chain is Phosphoribosyl-ATP pyrophosphatase (hisE) from Mycobacterium bovis (strain ATCC BAA-935 / AF2122/97).